We begin with the raw amino-acid sequence, 130 residues long: Fluoride-specific ion channel FluC (130 aa).

The next 4 membrane-spanning stretches (helical) occupy residues 3-23, 39-59, 67-87, and 102-122; these read FVFL…YFVG, GTFS…HLAV, FGIF…SYGL, and VSYA…GWFL. 2 residues coordinate Na(+): Gly77 and Thr80.

It belongs to the fluoride channel Fluc/FEX (TC 1.A.43) family.

The protein localises to the cell inner membrane. It carries out the reaction fluoride(in) = fluoride(out). Its activity is regulated as follows. Na(+) is not transported, but it plays an essential structural role and its presence is essential for fluoride channel function. Fluoride-specific ion channel. Important for reducing fluoride concentration in the cell, thus reducing its toxicity. The chain is Fluoride-specific ion channel FluC from Helicobacter pylori (strain ATCC 700392 / 26695) (Campylobacter pylori).